The chain runs to 1218 residues: Mgp-operon protein 3 (1218 aa).

Positions 1-25 are cleaved as a signal peptide; that stretch reads MKSKLKLKRYLLFLPLLPLGTLSLA. 4 disordered regions span residues 109 to 129, 213 to 245, 262 to 353, and 411 to 440; these read QESQKALNGSQSGSSDTSGSN, HFGSGQESSWNSQRSQKGLKNNPGPKAVTGFKL, EPLD…AVVS, and QDATSTNLPHAAGASQTGLGTGSPREPALT. A compositionally biased stretch (low complexity) spans 116 to 129; it reads NGSQSGSSDTSGSN. Positions 217–231 are enriched in polar residues; sequence GQESSWNSQRSQKGL. Over residues 265 to 286 the composition is skewed to basic and acidic residues; the sequence is DSTKEGKGKDESSWKNSEKTTA. A compositionally biased stretch (low complexity) spans 301–342; it reads AGSASSLQGNGSNSSGLKSLLRSAPVSVPPSSTSNQTLSLSN. The segment covering 411–428 has biased composition (polar residues); sequence QDATSTNLPHAAGASQTG. A helical membrane pass occupies residues 1121–1141; that stretch reads VGSSVGILLILLILGLGIGIP. The span at 1192 to 1204 shows a compositional bias: low complexity; the sequence is NNAAPKAPVKPAA. The interval 1192-1218 is disordered; sequence NNAAPKAPVKPAAPTAPRPPVQPPKKA. Residues 1205-1218 show a composition bias toward pro residues; sequence PTAPRPPVQPPKKA.

It is found in the cell membrane. The sequence is that of Mgp-operon protein 3 from Mycoplasma pneumoniae (strain ATCC 29342 / M129 / Subtype 1) (Mycoplasmoides pneumoniae).